The chain runs to 546 residues: Chaperonin GroEL (546 aa).

ATP is bound by residues 30–33 (TLGP), Lys51, 87–91 (DGTTT), Gly415, 479–481 (NAA), and Asp495. The interval 527–546 (DESAAPAMPGGMGGMGDMGM) is disordered. Over residues 536-546 (GGMGGMGDMGM) the composition is skewed to gly residues.

The protein belongs to the chaperonin (HSP60) family. Forms a cylinder of 14 subunits composed of two heptameric rings stacked back-to-back. Interacts with the co-chaperonin GroES.

It localises to the cytoplasm. It carries out the reaction ATP + H2O + a folded polypeptide = ADP + phosphate + an unfolded polypeptide.. Functionally, together with its co-chaperonin GroES, plays an essential role in assisting protein folding. The GroEL-GroES system forms a nano-cage that allows encapsulation of the non-native substrate proteins and provides a physical environment optimized to promote and accelerate protein folding. The sequence is that of Chaperonin GroEL from Acidovorax sp. (strain JS42).